Reading from the N-terminus, the 146-residue chain is Hemoglobin subunit beta (146 aa).

Position 1 is an N-acetylvaline (V1). Residues 2–146 form the Globin domain; sequence QLSGEEKAAV…VANALAHKYH (145 aa). Phosphoserine is present on S44. K59 is subject to N6-acetyllysine. H63 provides a ligand contact to heme b. An N6-acetyllysine modification is found at K82. Residue H92 coordinates heme b. Position 93 is an S-nitrosocysteine (C93). K144 is subject to N6-acetyllysine.

It belongs to the globin family. Heterotetramer of two alpha chains and two beta chains. As to expression, red blood cells.

Functionally, involved in oxygen transport from the lung to the various peripheral tissues. In Equus caballus (Horse), this protein is Hemoglobin subunit beta (HBB).